A 415-amino-acid chain; its full sequence is Gamma-glutamyl phosphate reductase (415 aa).

The protein belongs to the gamma-glutamyl phosphate reductase family.

It is found in the cytoplasm. It catalyses the reaction L-glutamate 5-semialdehyde + phosphate + NADP(+) = L-glutamyl 5-phosphate + NADPH + H(+). The protein operates within amino-acid biosynthesis; L-proline biosynthesis; L-glutamate 5-semialdehyde from L-glutamate: step 2/2. Catalyzes the NADPH-dependent reduction of L-glutamate 5-phosphate into L-glutamate 5-semialdehyde and phosphate. The product spontaneously undergoes cyclization to form 1-pyrroline-5-carboxylate. The sequence is that of Gamma-glutamyl phosphate reductase from Mycolicibacterium gilvum (strain PYR-GCK) (Mycobacterium gilvum (strain PYR-GCK)).